Consider the following 292-residue polypeptide: Pyridoxal 5'-phosphate synthase subunit PdxS (292 aa).

Asp22 contributes to the D-ribose 5-phosphate binding site. The active-site Schiff-base intermediate with D-ribose 5-phosphate is the Lys79. Gly151 lines the D-ribose 5-phosphate pocket. Arg163 serves as a coordination point for D-glyceraldehyde 3-phosphate. D-ribose 5-phosphate contacts are provided by residues Gly212 and 233–234 (GS).

It belongs to the PdxS/SNZ family. In terms of assembly, in the presence of PdxT, forms a dodecamer of heterodimers.

It carries out the reaction aldehydo-D-ribose 5-phosphate + D-glyceraldehyde 3-phosphate + L-glutamine = pyridoxal 5'-phosphate + L-glutamate + phosphate + 3 H2O + H(+). The protein operates within cofactor biosynthesis; pyridoxal 5'-phosphate biosynthesis. Functionally, catalyzes the formation of pyridoxal 5'-phosphate from ribose 5-phosphate (RBP), glyceraldehyde 3-phosphate (G3P) and ammonia. The ammonia is provided by the PdxT subunit. Can also use ribulose 5-phosphate and dihydroxyacetone phosphate as substrates, resulting from enzyme-catalyzed isomerization of RBP and G3P, respectively. The protein is Pyridoxal 5'-phosphate synthase subunit PdxS of Caldanaerobacter subterraneus subsp. tengcongensis (strain DSM 15242 / JCM 11007 / NBRC 100824 / MB4) (Thermoanaerobacter tengcongensis).